The primary structure comprises 396 residues: Probable sugar efflux transporter (396 aa).

Over 1–14 the chain is Cytoplasmic; the sequence is MTTNTVSRKVAWLR. The helical transmembrane segment at 15–35 threads the bilayer; sequence VVTLAVAAFIFNTTEFVPVGL. The Periplasmic portion of the chain corresponds to 36–49; sequence LSDIAQSFHMQTAQ. A helical transmembrane segment spans residues 50–70; the sequence is VGIMLTIYAWVVALMSLPFML. The Cytoplasmic segment spans residues 71-80; the sequence is MTSQVERRKL. The helical transmembrane segment at 81–101 threads the bilayer; that stretch reads LICLFVVFIASHVLSFLSWSF. Threonine 102 is a topological domain (periplasmic). A helical transmembrane segment spans residues 103–123; the sequence is VLVISRIGVAFAHAIFWSITA. Residues 124–135 are Cytoplasmic-facing; it reads SLAIRMAPAGKR. A helical transmembrane segment spans residues 136-156; the sequence is AQALSLIATGTALAMVLGLPL. Topologically, residues 157-169 are periplasmic; the sequence is GRIVGQYFGWRMT. Residues 170–190 form a helical membrane-spanning segment; it reads FFAIGIGALITLLCLIKLLPL. Topologically, residues 191 to 208 are cytoplasmic; that stretch reads LPSEHSGSLKSLPLLFRR. The helical transmembrane segment at 209 to 229 threads the bilayer; that stretch reads PALMSIYLLTVVVVTAHYTAY. Over 230–245 the chain is Periplasmic; it reads SYIEPFVQNIAGFSAN. A helical membrane pass occupies residues 246-266; that stretch reads FATALLLLLGGAGIIGSVIFG. Residues 267–274 are Cytoplasmic-facing; the sequence is KLGNQYAS. A helical membrane pass occupies residues 275-295; sequence ALVSTAIALLLVCLALLLPAA. Residues 296–298 are Periplasmic-facing; the sequence is NSE. A helical membrane pass occupies residues 299 to 319; it reads IHLGVLSIFWGIAMMIIGLGM. Over 320 to 332 the chain is Cytoplasmic; the sequence is QVKVLALAPDATD. The chain crosses the membrane as a helical span at residues 333-353; it reads VAMALFSGIFNIGIGAGALVG. The Periplasmic portion of the chain corresponds to 354 to 363; the sequence is NQVSLHWSMS. A helical membrane pass occupies residues 364–384; it reads MIGYVGTVPAFAALIWSIIIF. At 385–396 the chain is on the cytoplasmic side; it reads RRWPVTLEEQTQ.

Belongs to the major facilitator superfamily. SotB (TC 2.A.1.2) family.

It localises to the cell inner membrane. Functionally, involved in the efflux of sugars. The physiological role may be the reduction of the intracellular concentration of toxic sugars or sugar metabolites. The chain is Probable sugar efflux transporter from Escherichia coli O157:H7.